A 311-amino-acid chain; its full sequence is MTSMSHHRSLQAELETLTTEAFRPELAEIDQLPTLEIARLMNGEDATVPAAVAARLPQIAAAIDAVADRMARGGRLVYAGAGTAGRLGVLDASECPPTFNTDPSEVVGLIAGGPSAMVTSIEGAEDSKELAAGDLAGLGLTADDTVVGVSASGRTPYAIGAVEYARARGALTVGLSCNADSALAAAADHGIEIVAGPELLTGSTRLKAGTAQKLVLNMLSTITMIRLGKTYGNLMVDVRASNEKLRARSRRIVALATGAADEEVERALAATDGEVKNAILTILGGVDGPTAARLLEESDGHLRAALAAAPR.

One can recognise an SIS domain in the interval 66–229 (VADRMARGGR…STITMIRLGK (164 aa)). Residue E94 is the Proton donor of the active site. The active site involves E125.

Belongs to the GCKR-like family. MurNAc-6-P etherase subfamily. As to quaternary structure, homodimer.

It carries out the reaction N-acetyl-D-muramate 6-phosphate + H2O = N-acetyl-D-glucosamine 6-phosphate + (R)-lactate. It participates in amino-sugar metabolism; N-acetylmuramate degradation. In terms of biological role, specifically catalyzes the cleavage of the D-lactyl ether substituent of MurNAc 6-phosphate, producing GlcNAc 6-phosphate and D-lactate. The polypeptide is N-acetylmuramic acid 6-phosphate etherase (Streptomyces avermitilis (strain ATCC 31267 / DSM 46492 / JCM 5070 / NBRC 14893 / NCIMB 12804 / NRRL 8165 / MA-4680)).